Reading from the N-terminus, the 349-residue chain is Protein RecA (349 aa).

Gly65–Thr72 contacts ATP.

This sequence belongs to the RecA family.

It localises to the cytoplasm. Can catalyze the hydrolysis of ATP in the presence of single-stranded DNA, the ATP-dependent uptake of single-stranded DNA by duplex DNA, and the ATP-dependent hybridization of homologous single-stranded DNAs. It interacts with LexA causing its activation and leading to its autocatalytic cleavage. The protein is Protein RecA of Vibrio vulnificus (strain CMCP6).